A 347-amino-acid polypeptide reads, in one-letter code: UDP-3-O-acylglucosamine N-acyltransferase (347 aa).

The active-site Proton acceptor is His245.

The protein belongs to the transferase hexapeptide repeat family. LpxD subfamily. Homotrimer.

The catalysed reaction is a UDP-3-O-[(3R)-3-hydroxyacyl]-alpha-D-glucosamine + a (3R)-hydroxyacyl-[ACP] = a UDP-2-N,3-O-bis[(3R)-3-hydroxyacyl]-alpha-D-glucosamine + holo-[ACP] + H(+). It functions in the pathway bacterial outer membrane biogenesis; LPS lipid A biosynthesis. In terms of biological role, catalyzes the N-acylation of UDP-3-O-acylglucosamine using 3-hydroxyacyl-ACP as the acyl donor. Is involved in the biosynthesis of lipid A, a phosphorylated glycolipid that anchors the lipopolysaccharide to the outer membrane of the cell. The chain is UDP-3-O-acylglucosamine N-acyltransferase from Chromohalobacter salexigens (strain ATCC BAA-138 / DSM 3043 / CIP 106854 / NCIMB 13768 / 1H11).